Consider the following 363-residue polypeptide: Type-2 angiotensin II receptor (363 aa).

Over 1-45 (MKDNFSFAATSRNITSSLPFVNLNMSGTNDLIFNCSHKPSDKHLE) the chain is Extracellular. Asparagine 4, asparagine 13, asparagine 24, and asparagine 34 each carry an N-linked (GlcNAc...) asparagine glycan. Disulfide bonds link cysteine 35–cysteine 290 and cysteine 117–cysteine 195. A helical transmembrane segment spans residues 46-70 (AIPVLYYLIFVIGFAVNIIVVSLFC). The Cytoplasmic segment spans residues 71–80 (CQKGPKKVSS). A helical membrane pass occupies residues 81–104 (IYIFNLAVADLLLLATLPLWATYY). 2 residues coordinate angiotensin II: tyrosine 103 and tyrosine 104. Topologically, residues 105-114 (SYRYDWLFGP) are extracellular. The helical transmembrane segment at 115-140 (VMCKVFGSFLTLNMFASIFFITCMSV) threads the bilayer. The Cytoplasmic segment spans residues 141-159 (DRYQSVIYPFLSQRRNPWQ). The chain crosses the membrane as a helical span at residues 160–181 (ASYVVPLVWCMACLSSLPTFYF). Angiotensin II contacts are provided by arginine 182, tyrosine 204, and lysine 215. At 182–206 (RDVRTIEYLGVNACVMAFPPEKYAQ) the chain is on the extracellular side. The helical transmembrane segment at 207 to 232 (WSAGIALMKNVLGFIIPLIFIATCYF) threads the bilayer. At 233–257 (GIRKHLLKTNSYGKNRITRDQVLKM) the chain is on the cytoplasmic side. Residues 258–281 (AAAVVLAFIICWLPFHVLTFLDAL) form a helical membrane-spanning segment. Angiotensin II is bound at residue aspartate 279. At 282–294 (SWMGIINSCEVMA) the chain is on the extracellular side. The chain crosses the membrane as a helical span at residues 295-320 (VIDLALPFAILLGFTNSCVNPFLYCF). Aspartate 297 lines the angiotensin II pocket. The Cytoplasmic segment spans residues 321–363 (VGNRFQQKLRSMFRVPITWLQGKRETMSCRKSSSLREMDTFVS). Residues 324–333 (RFQQKLRSMF) are helix VIII. A Phosphoserine; by PKC modification is found at serine 354.

It belongs to the G-protein coupled receptor 1 family. Interacts with MTUS1.

The protein localises to the cell membrane. Functionally, receptor for angiotensin II, a vasoconstricting peptide. Signals primarily via a non-canonical G-protein- and beta-arrestin independent pathways. Cooperates with MTUS1 to inhibit ERK2 activation and cell proliferation. The protein is Type-2 angiotensin II receptor (AGTR2) of Meriones unguiculatus (Mongolian jird).